The primary structure comprises 402 residues: Beta-1,4-galactosyltransferase 1 (402 aa).

The Cytoplasmic portion of the chain corresponds to 1-24; the sequence is MKFREPLLGGSAAMPGASLQRACR. A helical; Signal-anchor for type II membrane protein transmembrane segment spans residues 25 to 44; that stretch reads LLVAVCALHLGVTLVYYLAG. The Lumenal portion of the chain corresponds to 45 to 402; that stretch reads RDLRRLPQLV…KITVDIGTPS (358 aa). Positions 77-130 are disordered; that stretch reads LRLRGVAPPPPLQNSSKPRSRAPSNLDAYSHPGPGPGPGSNLTSAPVPSTTTRS. Residues N90 and N117 are each glycosylated (N-linked (GlcNAc...) asparagine). Polar residues predominate over residues 116–130; that stretch reads SNLTSAPVPSTTTRS. An intrachain disulfide couples C134 to C176. Residues 187–191, 226–228, 253–254, and W314 contribute to the UDP-alpha-D-galactose site; these read PFRNR, FNR, and VD. C247 and C266 form a disulfide bridge. Position 254 (D254) interacts with Mn(2+). N-acetyl-D-glucosamine is bound at residue 316-319; it reads GEDD. H347 serves as a coordination point for Mn(2+). 347 to 349 provides a ligand contact to UDP-alpha-D-galactose; the sequence is HSR. An N-acetyl-D-glucosamine-binding site is contributed by R359.

It belongs to the glycosyltransferase 7 family. As to quaternary structure, homodimer; and heterodimer with alpha-lactalbumin to form lactose synthase. Interacts (via N-terminal cytoplasmic domain) with UBE2Q1 (via N-terminus); the interaction is direct. Requires Mn(2+) as cofactor. In terms of processing, the soluble form derives from the membrane forms by proteolytic processing. In terms of tissue distribution, detected in milk (at protein level).

Its subcellular location is the golgi apparatus. The protein localises to the golgi stack membrane. It is found in the cell membrane. It localises to the cell surface. The protein resides in the cell projection. Its subcellular location is the filopodium. The protein localises to the secreted. It catalyses the reaction D-glucose + UDP-alpha-D-galactose = lactose + UDP + H(+). It carries out the reaction an N-acetyl-beta-D-glucosaminyl derivative + UDP-alpha-D-galactose = a beta-D-galactosyl-(1-&gt;4)-N-acetyl-beta-D-glucosaminyl derivative + UDP + H(+). The catalysed reaction is N-acetyl-D-glucosamine + UDP-alpha-D-galactose = beta-D-galactosyl-(1-&gt;4)-N-acetyl-D-glucosamine + UDP + H(+). The enzyme catalyses a beta-D-GlcNAc-(1-&gt;3)-beta-D-Gal-(1-&gt;4)-beta-D-Glc-(1&lt;-&gt;1)-Cer(d18:1(4E)) + UDP-alpha-D-galactose = a neolactoside nLc4Cer(d18:1(4E)) + UDP + H(+). It catalyses the reaction a beta-D-glucosylceramide + UDP-alpha-D-galactose = a beta-D-galactosyl-(1-&gt;4)-beta-D-glucosyl-(1&lt;-&gt;1)-ceramide + UDP + H(+). It carries out the reaction a neolactoside IV(3)-beta-GlcNAc-nLc4Cer + UDP-alpha-D-galactose = a neolactoside nLc6Cer + UDP + H(+). It participates in protein modification; protein glycosylation. Functionally, the Golgi complex form catalyzes the production of lactose in the lactating mammary gland and could also be responsible for the synthesis of complex-type N-linked oligosaccharides in many glycoproteins as well as the carbohydrate moieties of glycolipids. In terms of biological role, the cell surface form functions as a recognition molecule during a variety of cell to cell and cell to matrix interactions, as those occurring during development and egg fertilization, by binding to specific oligosaccharide ligands on opposing cells or in the extracellular matrix. The secreted form is responsible for the synthesis of complex-type to N-linked oligosaccharides in many glycoproteins as well as the carbohydrate moieties of glycolipids. The protein is Beta-1,4-galactosyltransferase 1 (B4GALT1) of Bos taurus (Bovine).